The chain runs to 86 residues: Large ribosomal subunit protein uL23 (86 aa).

This sequence belongs to the universal ribosomal protein uL23 family. Part of the 50S ribosomal subunit. Contacts protein L29.

Its function is as follows. Binds to 23S rRNA. One of the proteins that surrounds the polypeptide exit tunnel on the outside of the ribosome. This chain is Large ribosomal subunit protein uL23, found in Methanococcus maripaludis (strain C6 / ATCC BAA-1332).